The sequence spans 544 residues: Cytochrome P450 82A1 (544 aa).

Residue Cys-481 coordinates heme.

The protein belongs to the cytochrome P450 family. Heme serves as cofactor.

It is found in the membrane. This is Cytochrome P450 82A1 (CYP82A1) from Pisum sativum (Garden pea).